Consider the following 296-residue polypeptide: Formamidopyrimidine-DNA glycosylase (296 aa).

Proline 2 (schiff-base intermediate with DNA) is an active-site residue. The Proton donor role is filled by glutamate 3. Lysine 61 acts as the Proton donor; for beta-elimination activity in catalysis. DNA contacts are provided by histidine 95, arginine 122, and lysine 169. The FPG-type zinc-finger motif lies at 255 to 289 (NAYGRNDQPCARCGTPIQRETFMNRSSYSCPRCQP). The Proton donor; for delta-elimination activity role is filled by arginine 279.

This sequence belongs to the FPG family. In terms of assembly, monomer. The cofactor is Zn(2+).

It carries out the reaction Hydrolysis of DNA containing ring-opened 7-methylguanine residues, releasing 2,6-diamino-4-hydroxy-5-(N-methyl)formamidopyrimidine.. It catalyses the reaction 2'-deoxyribonucleotide-(2'-deoxyribose 5'-phosphate)-2'-deoxyribonucleotide-DNA = a 3'-end 2'-deoxyribonucleotide-(2,3-dehydro-2,3-deoxyribose 5'-phosphate)-DNA + a 5'-end 5'-phospho-2'-deoxyribonucleoside-DNA + H(+). Functionally, involved in base excision repair of DNA damaged by oxidation or by mutagenic agents. Acts as a DNA glycosylase that recognizes and removes damaged bases. Has a preference for oxidized purines, such as 7,8-dihydro-8-oxoguanine (8-oxoG). Has AP (apurinic/apyrimidinic) lyase activity and introduces nicks in the DNA strand. Cleaves the DNA backbone by beta-delta elimination to generate a single-strand break at the site of the removed base with both 3'- and 5'-phosphates. The sequence is that of Formamidopyrimidine-DNA glycosylase from Thermobifida fusca (strain YX).